The primary structure comprises 590 residues: Glutamine--fructose-6-phosphate aminotransferase [isomerizing] (590 aa).

Residue Cys-2 is the Nucleophile; for GATase activity of the active site. Residues 2 to 221 (CGIIGIVSSK…DGELGFITTS (220 aa)) enclose the Glutamine amidotransferase type-2 domain. SIS domains follow at residues 286 to 422 (IIAE…DNTN) and 445 to 580 (IGEE…PDKP). Catalysis depends on Lys-585, which acts as the For Fru-6P isomerization activity.

As to quaternary structure, homodimer.

Its subcellular location is the cytoplasm. It carries out the reaction D-fructose 6-phosphate + L-glutamine = D-glucosamine 6-phosphate + L-glutamate. Its function is as follows. Catalyzes the first step in hexosamine metabolism, converting fructose-6P into glucosamine-6P using glutamine as a nitrogen source. This is Glutamine--fructose-6-phosphate aminotransferase [isomerizing] from Sulfolobus acidocaldarius (strain ATCC 33909 / DSM 639 / JCM 8929 / NBRC 15157 / NCIMB 11770).